A 52-amino-acid chain; its full sequence is uncharacterized protein (52 aa).

Residues 7 to 27 (MFQLFVFIIFAAVVFAAVTGF) form a helical membrane-spanning segment.

The protein resides in the membrane. This is an uncharacterized protein from Bacillus subtilis (strain 168).